The following is a 100-amino-acid chain: Small ribosomal subunit protein uS14 (100 aa).

Belongs to the universal ribosomal protein uS14 family. In terms of assembly, part of the 30S ribosomal subunit. Contacts proteins S3 and S10.

Binds 16S rRNA, required for the assembly of 30S particles and may also be responsible for determining the conformation of the 16S rRNA at the A site. The chain is Small ribosomal subunit protein uS14 from Synechocystis sp. (strain ATCC 27184 / PCC 6803 / Kazusa).